The chain runs to 392 residues: 8-amino-7-oxononanoate synthase (392 aa).

Arg-19 serves as a coordination point for substrate. Position 106 to 107 (106 to 107 (GY)) interacts with pyridoxal 5'-phosphate. His-131 serves as a coordination point for substrate. Positions 176, 204, and 233 each coordinate pyridoxal 5'-phosphate. Lys-236 is modified (N6-(pyridoxal phosphate)lysine). Thr-350 contacts substrate.

Belongs to the class-II pyridoxal-phosphate-dependent aminotransferase family. BioF subfamily. In terms of assembly, homodimer. Pyridoxal 5'-phosphate serves as cofactor.

It catalyses the reaction 6-carboxyhexanoyl-[ACP] + L-alanine + H(+) = (8S)-8-amino-7-oxononanoate + holo-[ACP] + CO2. It functions in the pathway cofactor biosynthesis; biotin biosynthesis. Its function is as follows. Catalyzes the decarboxylative condensation of pimeloyl-[acyl-carrier protein] and L-alanine to produce 8-amino-7-oxononanoate (AON), [acyl-carrier protein], and carbon dioxide. The sequence is that of 8-amino-7-oxononanoate synthase from Stutzerimonas stutzeri (strain A1501) (Pseudomonas stutzeri).